Here is a 243-residue protein sequence, read N- to C-terminus: MEVGRYLKEGLLISLQQRLREFAEGIRKPTSSLKVHRQIVSLLEKPDPVILDIGCNDGSDARRFLQLRPKAQLFCFEPDPRAAARCRENMGPLDRMRLFEVAISDRNGRIDFHPSNGDGDAKEWDLSGSIRQPKNHLSEYQWVRFDGPISVETRRLDDWCSEAGLESIDLIWMDVQGAESDVIAGGKETLTKTRFIYTEYSDQELYEGQLPLRAILDLLPSFELVAQFPRGVEGDVLLRNTKL.

It belongs to the FkbM methyltransferase family.

The protein localises to the cytoplasm. Functionally, required for 2-O-methylation of the fucosyl group of Nod factors. The polypeptide is 2-O-methyltransferase NoeI (noeI) (Sinorhizobium fredii (strain NBRC 101917 / NGR234)).